Here is a 341-residue protein sequence, read N- to C-terminus: Ketol-acid reductoisomerase (NADP(+)) (341 aa).

Positions 3 to 184 (LKVYYDKDCD…GGGRSGIIET (182 aa)) constitute a KARI N-terminal Rossmann domain. NADP(+)-binding positions include 26–29 (FGSQ), S54, and 84–87 (DELQ). H109 is a catalytic residue. G135 contributes to the NADP(+) binding site. The KARI C-terminal knotted domain maps to 185-330 (TFKDETETDL…GRLRAMMPWI (146 aa)). The Mg(2+) site is built by D193, E197, E229, and E233. S254 serves as a coordination point for substrate.

The protein belongs to the ketol-acid reductoisomerase family. Mg(2+) is required as a cofactor.

It carries out the reaction (2R)-2,3-dihydroxy-3-methylbutanoate + NADP(+) = (2S)-2-acetolactate + NADPH + H(+). The enzyme catalyses (2R,3R)-2,3-dihydroxy-3-methylpentanoate + NADP(+) = (S)-2-ethyl-2-hydroxy-3-oxobutanoate + NADPH + H(+). It participates in amino-acid biosynthesis; L-isoleucine biosynthesis; L-isoleucine from 2-oxobutanoate: step 2/4. It functions in the pathway amino-acid biosynthesis; L-valine biosynthesis; L-valine from pyruvate: step 2/4. Functionally, involved in the biosynthesis of branched-chain amino acids (BCAA). Catalyzes an alkyl-migration followed by a ketol-acid reduction of (S)-2-acetolactate (S2AL) to yield (R)-2,3-dihydroxy-isovalerate. In the isomerase reaction, S2AL is rearranged via a Mg-dependent methyl migration to produce 3-hydroxy-3-methyl-2-ketobutyrate (HMKB). In the reductase reaction, this 2-ketoacid undergoes a metal-dependent reduction by NADPH to yield (R)-2,3-dihydroxy-isovalerate. The polypeptide is Ketol-acid reductoisomerase (NADP(+)) (Helicobacter hepaticus (strain ATCC 51449 / 3B1)).